The following is a 164-amino-acid chain: Sperm axonemal maintenance protein CFAP97D1 (164 aa).

Positions L61 to A88 form a coiled coil.

It belongs to the CFAP97 family. In terms of tissue distribution, expressed exclusively in testis.

Its function is as follows. Required for male fertility through its role in axonemal doublet stabilization which is essential for sperm motility and fertilization. This Mus musculus (Mouse) protein is Sperm axonemal maintenance protein CFAP97D1 (Cfap97d1).